The following is a 514-amino-acid chain: Cilia- and flagella-associated protein 53 (514 aa).

Coiled-coil stretches lie at residues 91–176 and 205–478; these read VINT…EKKV and WEED…AGLA. Disordered regions lie at residues 261-296 and 495-514; these read QNKA…QDKI and QALS…KPPL.

The protein belongs to the CFAP53 family. As to quaternary structure, microtubule inner protein component of sperm flagellar doublet microtubules. Interacts with PIERCE1 and PIERCE2; the interactions link outer dynein arms docking complex (ODA-DC) to the internal microtubule inner proteins (MIP) in cilium axoneme. Interacts with CCDC38. Interacts with CCDC42 and IFT88. Interacts with centriolar satellite proteins PIBF1/CEP90 and PCM1. Interacts with dyneins DNAIC1, DNAIC2 AND DNAH11 and with ODA-DC component ODAD4/TTC25. As to expression, expressed predominantly in testis (at protein level). In embryos at 8 dpc, specifically expressed in the node, in particular within the pit cells that are located at the center of the node and have rotating monocilia on their apical surface. In the adult, expressed in epithelial cells of the trachea, brain ventricles, oviduct and testis.

Its subcellular location is the cytoplasm. It localises to the cytoskeleton. The protein localises to the cilium axoneme. The protein resides in the flagellum axoneme. It is found in the microtubule organizing center. Its subcellular location is the centrosome. It localises to the centriolar satellite. The protein localises to the spindle pole. Microtubule inner protein (MIP) part of the dynein-decorated doublet microtubules (DMTs) in cilia axoneme, which is required for motile cilia beating. Regulates motility patterns of both 9+0 and 9+2 motile cilia through differential localization and recruitment of axonemal dynein components. Required for centriolar satellite integrity and non-motile cilium assembly. Required for motile cilium formation. Through its role in the beating of primary cilia, involved in the establishment of organ laterality during embryogenesis. Required for sperm flagellum biogenesis and is essential for male fertility. This Mus musculus (Mouse) protein is Cilia- and flagella-associated protein 53.